Here is a 476-residue protein sequence, read N- to C-terminus: Glycogen synthase (476 aa).

K15 contacts ADP-alpha-D-glucose.

It belongs to the glycosyltransferase 1 family. Bacterial/plant glycogen synthase subfamily.

It catalyses the reaction [(1-&gt;4)-alpha-D-glucosyl](n) + ADP-alpha-D-glucose = [(1-&gt;4)-alpha-D-glucosyl](n+1) + ADP + H(+). It functions in the pathway glycan biosynthesis; glycogen biosynthesis. Synthesizes alpha-1,4-glucan chains using ADP-glucose. This chain is Glycogen synthase, found in Chlamydia pneumoniae (Chlamydophila pneumoniae).